We begin with the raw amino-acid sequence, 731 residues long: MGKGKNHDRKANPGFGKVKSKSGTSTGEFTLKRVKGENFYRDAKSAARVKMLNGGKAVRDRDGKIVEAAAFQKGEKEAEPGRVKPDRRWFGNTRVISQSALDHFRTALKEQKADPYSVLLKRNKLPMGLLQDDTKDSGSRPHIVETEPFGDTFGPKAQRKRPRLDIGSIEELGESSAAAATAAEAATAESQANGTADLADIYHPTTSTAREPIYAKGTSRRIWGELYKVLDSSDVVIHVLDARDPLGTRCKPVVEYLRKEKAHKHLVYVLNKVDLVPTWVTSGPYAYAYANGPARWVKHLSLSAPTIAFHASINNSFGKGSLIQLLRQFSVLHSDKKQISVGFIGYPNTGKSSIINTLKKKKVCTVAPIPGETKVWQYITLMRRIYLIDCPGIVPVSAKDSDTDTVLKGVVRVENLATPAEHIPALLERVRPEYLERTYNLEHVEGGWHGEQGATVILTAIAKKSGKLLKGGEPDQEAAAKMVLNDWIRGKIPFFVAPPAKSEPGAPTAATAAAATTTEAEKKKTEAEEQELAEERETMEILEEQERSLGKVLGIKRVKGVEQPISKIVTMTKFIGDDARRYVEEEEVVDQDKEMVEKEEEEEEEEDEDEDEEEEELAWEDVFPEEADAVDGGEEVEESDKEETDDEEDVDEEEAVPSAKQLGKRKAIDSDEEEQTANKSKRMTTNKQKATNFYTHANVKNRNRDRKVPKNPGKRSRGDDETTGKKAKKRR.

2 disordered regions span residues 1-27 and 130-162; these read MGKGKNHDRKANPGFGKVKSKSGTSTG and LQDDTKDSGSRPHIVETEPFGDTFGPKAQRKRP. Basic and acidic residues predominate over residues 132–145; that stretch reads DDTKDSGSRPHIVE. Positions 223 to 396 constitute a CP-type G domain; the sequence is WGELYKVLDS…LIDCPGIVPV (174 aa). Residues 345–352 and 389–393 contribute to the GTP site; these read GYPNTGKS and DCPGI. 2 disordered regions span residues 517–541 and 585–731; these read TTEAEKKKTEAEEQELAEERETMEI and EEEV…KKRR. Positions 519–541 are enriched in basic and acidic residues; the sequence is EAEKKKTEAEEQELAEERETMEI. Over residues 597–655 the composition is skewed to acidic residues; that stretch reads EKEEEEEEEEDEDEDEEEEELAWEDVFPEEADAVDGGEEVEESDKEETDDEEDVDEEEA. Residues 685–698 show a composition bias toward polar residues; that stretch reads TNKQKATNFYTHAN. The span at 699–715 shows a compositional bias: basic residues; sequence VKNRNRDRKVPKNPGKR.

Belongs to the TRAFAC class YlqF/YawG GTPase family. NOG2 subfamily.

The protein localises to the nucleus. The protein resides in the nucleolus. GTPase that associates with pre-60S ribosomal subunits in the nucleolus and is required for their nuclear export and maturation. This Cryptococcus gattii (Filobasidiella gattii) protein is Nucleolar GTP-binding protein 2 (NOG2).